The sequence spans 175 residues: ATP-dependent protease subunit HslV (175 aa).

Threonine 2 is an active-site residue. Na(+)-binding residues include alanine 156, cysteine 159, and threonine 162.

It belongs to the peptidase T1B family. HslV subfamily. In terms of assembly, a double ring-shaped homohexamer of HslV is capped on each side by a ring-shaped HslU homohexamer. The assembly of the HslU/HslV complex is dependent on binding of ATP.

The protein localises to the cytoplasm. It carries out the reaction ATP-dependent cleavage of peptide bonds with broad specificity.. With respect to regulation, allosterically activated by HslU binding. Its function is as follows. Protease subunit of a proteasome-like degradation complex believed to be a general protein degrading machinery. This chain is ATP-dependent protease subunit HslV, found in Rhizobium rhizogenes (strain K84 / ATCC BAA-868) (Agrobacterium radiobacter).